A 187-amino-acid chain; its full sequence is Preprocaerulein clone PXC202 (187 aa).

Residues 1 to 9 constitute a propeptide that is removed on maturation; it reads NDERRFADG. The tract at residues 1 to 21 is disordered; the sequence is NDERRFADGQQDYTGWMDFGR. A Sulfotyrosine modification is found at Y13. F19 carries the post-translational modification Phenylalanine amide. The propeptide occupies 23-73; sequence DDEDDVNERDVRGFGSFLGKALKAALKIGANALGGSPQQREANDERRFADG. At Y77 the chain carries Sulfotyrosine. The residue at position 83 (F83) is a Phenylalanine amide. A propeptide spanning residues 87–137 is cleaved from the precursor; the sequence is DDEDDVNERDVRGFGSFLGKALKAALKIGANALGGSLQQREVNDERRFADG. At Y141 the chain carries Sulfotyrosine. At F147 the chain carries Phenylalanine amide. The propeptide occupies 151–152; the sequence is DG. Y156 is modified (sulfotyrosine). F162 carries the phenylalanine amide modification. A propeptide spanning residues 166 to 187 is cleaved from the precursor; sequence DDEDDVHERDVRGFGSFLGKAL.

This sequence belongs to the gastrin/cholecystokinin family. In terms of tissue distribution, expressed by the skin glands.

Its subcellular location is the secreted. Functionally, the pharmacological activities of caerulein are quite similar to the physiological activities of gastrin and related peptides. The polypeptide is Preprocaerulein clone PXC202 (Xenopus laevis (African clawed frog)).